The following is a 113-amino-acid chain: Protein translation factor SUI1 homolog 2 (113 aa).

The residue at position 2 (Ser2) is an N-acetylserine.

The protein belongs to the SUI1 family.

Its function is as follows. Probably involved in translation. In Arabidopsis thaliana (Mouse-ear cress), this protein is Protein translation factor SUI1 homolog 2.